A 389-amino-acid polypeptide reads, in one-letter code: Cytochrome B translational activator CBS2 (389 aa).

It localises to the mitochondrion. Translational activator of cytochrome b. The cytochrome b (coB) leader RNA may represent the target sequence for CBS1 and/ or CBS2. The polypeptide is Cytochrome B translational activator CBS2 (CBS2) (Saccharomyces cerevisiae (strain ATCC 204508 / S288c) (Baker's yeast)).